Consider the following 262-residue polypeptide: Phosphoribosylformylglycinamidine synthase subunit PurQ (262 aa).

Positions 2-238 (RIAVIQFPGT…FAWQLPRKHP (237 aa)) constitute a Glutamine amidotransferase type-1 domain. Catalysis depends on C87, which acts as the Nucleophile. Active-site residues include H223 and E225.

In terms of assembly, part of the FGAM synthase complex composed of 1 PurL, 1 PurQ and 2 PurS subunits.

Its subcellular location is the cytoplasm. The enzyme catalyses N(2)-formyl-N(1)-(5-phospho-beta-D-ribosyl)glycinamide + L-glutamine + ATP + H2O = 2-formamido-N(1)-(5-O-phospho-beta-D-ribosyl)acetamidine + L-glutamate + ADP + phosphate + H(+). It carries out the reaction L-glutamine + H2O = L-glutamate + NH4(+). Its pathway is purine metabolism; IMP biosynthesis via de novo pathway; 5-amino-1-(5-phospho-D-ribosyl)imidazole from N(2)-formyl-N(1)-(5-phospho-D-ribosyl)glycinamide: step 1/2. Functionally, part of the phosphoribosylformylglycinamidine synthase complex involved in the purines biosynthetic pathway. Catalyzes the ATP-dependent conversion of formylglycinamide ribonucleotide (FGAR) and glutamine to yield formylglycinamidine ribonucleotide (FGAM) and glutamate. The FGAM synthase complex is composed of three subunits. PurQ produces an ammonia molecule by converting glutamine to glutamate. PurL transfers the ammonia molecule to FGAR to form FGAM in an ATP-dependent manner. PurS interacts with PurQ and PurL and is thought to assist in the transfer of the ammonia molecule from PurQ to PurL. The chain is Phosphoribosylformylglycinamidine synthase subunit PurQ from Methanothrix thermoacetophila (strain DSM 6194 / JCM 14653 / NBRC 101360 / PT) (Methanosaeta thermophila).